A 184-amino-acid chain; its full sequence is Photosystem I assembly protein Ycf4 (184 aa).

A run of 2 helical transmembrane segments spans residues 22–42 (FCWA…GTSS) and 57–77 (IVFF…LFIS).

It belongs to the Ycf4 family.

The protein resides in the plastid. Its subcellular location is the chloroplast thylakoid membrane. In terms of biological role, seems to be required for the assembly of the photosystem I complex. The protein is Photosystem I assembly protein Ycf4 of Gossypium barbadense (Sea Island cotton).